The primary structure comprises 275 residues: Envelope glycoprotein (275 aa).

3 disulfide bridges follow: C1/C10, C18/C27, and C58/C62. N122 carries N-linked (GlcNAc...) asparagine; by host glycosylation. 4 disulfide bridges follow: C164-C194, C187-C239, C204-C209, and C240-C245.

This sequence belongs to the hantavirus envelope glycoprotein family. Homodimer. Homotetramer; forms heterotetrameric Gn-Gc spikes in the pre-fusion conformation. Homotrimer; forms homotrimer in the post-fusion conformation at acidic pH. Interacts (via C-terminus) with the nucleoprotein. In terms of processing, envelope polyprotein precursor is quickly cleaved in vivo just after synthesis, presumably by host signal peptidase.

The protein resides in the virion membrane. It localises to the host cell surface. Its subcellular location is the host Golgi apparatus membrane. It is found in the host endoplasmic reticulum membrane. Functionally, forms homotetramers with glycoprotein N at the surface of the virion. Attaches the virion to host cell receptors including integrin ITGAV/ITGB3. This attachment induces virion internalization predominantly through clathrin-dependent endocytosis. Class II fusion protein that promotes fusion of viral membrane with host endosomal membrane after endocytosis of the virion. In Homo sapiens (Human), this protein is Envelope glycoprotein (GP).